The primary structure comprises 278 residues: Small ribosomal subunit biogenesis GTPase RsgA (278 aa).

One can recognise a CP-type G domain in the interval 62–218; the sequence is KNTLVRPKVV…ICDTPGFNVI (157 aa). Residues 112-115 and 162-170 contribute to the GTP site; these read TKND and GQSGVGKSS. Residues C241, C246, H248, and C254 each coordinate Zn(2+).

The protein belongs to the TRAFAC class YlqF/YawG GTPase family. RsgA subfamily. Monomer. Associates with 30S ribosomal subunit, binds 16S rRNA. It depends on Zn(2+) as a cofactor.

It is found in the cytoplasm. Functionally, one of several proteins that assist in the late maturation steps of the functional core of the 30S ribosomal subunit. Helps release RbfA from mature subunits. May play a role in the assembly of ribosomal proteins into the subunit. Circularly permuted GTPase that catalyzes slow GTP hydrolysis, GTPase activity is stimulated by the 30S ribosomal subunit. This is Small ribosomal subunit biogenesis GTPase RsgA from Mycoplasma pneumoniae (strain ATCC 29342 / M129 / Subtype 1) (Mycoplasmoides pneumoniae).